The sequence spans 316 residues: Porphobilinogen deaminase (316 aa).

The residue at position 249 (Cys-249) is an S-(dipyrrolylmethanemethyl)cysteine.

It belongs to the HMBS family. As to quaternary structure, monomer. Dipyrromethane serves as cofactor.

The catalysed reaction is 4 porphobilinogen + H2O = hydroxymethylbilane + 4 NH4(+). The protein operates within porphyrin-containing compound metabolism; protoporphyrin-IX biosynthesis; coproporphyrinogen-III from 5-aminolevulinate: step 2/4. In terms of biological role, tetrapolymerization of the monopyrrole PBG into the hydroxymethylbilane pre-uroporphyrinogen in several discrete steps. The polypeptide is Porphobilinogen deaminase (Nitrobacter hamburgensis (strain DSM 10229 / NCIMB 13809 / X14)).